We begin with the raw amino-acid sequence, 175 residues long: SsrA-binding protein (175 aa).

Disordered stretches follow at residues 1–29 and 152–175; these read MTRN…ERDA and KRET…SRKS.

It belongs to the SmpB family.

The protein localises to the cytoplasm. Required for rescue of stalled ribosomes mediated by trans-translation. Binds to transfer-messenger RNA (tmRNA), required for stable association of tmRNA with ribosomes. tmRNA and SmpB together mimic tRNA shape, replacing the anticodon stem-loop with SmpB. tmRNA is encoded by the ssrA gene; the 2 termini fold to resemble tRNA(Ala) and it encodes a 'tag peptide', a short internal open reading frame. During trans-translation Ala-aminoacylated tmRNA acts like a tRNA, entering the A-site of stalled ribosomes, displacing the stalled mRNA. The ribosome then switches to translate the ORF on the tmRNA; the nascent peptide is terminated with the 'tag peptide' encoded by the tmRNA and targeted for degradation. The ribosome is freed to recommence translation, which seems to be the essential function of trans-translation. This Koribacter versatilis (strain Ellin345) protein is SsrA-binding protein.